The chain runs to 282 residues: Phosphatidylserine decarboxylase proenzyme (282 aa).

Active-site charge relay system; for autoendoproteolytic cleavage activity residues include Asp88, His144, and Ser247. The active-site Schiff-base intermediate with substrate; via pyruvic acid; for decarboxylase activity is the Ser247. Residue Ser247 is modified to Pyruvic acid (Ser); by autocatalysis.

It belongs to the phosphatidylserine decarboxylase family. PSD-B subfamily. Prokaryotic type I sub-subfamily. Heterodimer of a large membrane-associated beta subunit and a small pyruvoyl-containing alpha subunit. Pyruvate serves as cofactor. Is synthesized initially as an inactive proenzyme. Formation of the active enzyme involves a self-maturation process in which the active site pyruvoyl group is generated from an internal serine residue via an autocatalytic post-translational modification. Two non-identical subunits are generated from the proenzyme in this reaction, and the pyruvate is formed at the N-terminus of the alpha chain, which is derived from the carboxyl end of the proenzyme. The autoendoproteolytic cleavage occurs by a canonical serine protease mechanism, in which the side chain hydroxyl group of the serine supplies its oxygen atom to form the C-terminus of the beta chain, while the remainder of the serine residue undergoes an oxidative deamination to produce ammonia and the pyruvoyl prosthetic group on the alpha chain. During this reaction, the Ser that is part of the protease active site of the proenzyme becomes the pyruvoyl prosthetic group, which constitutes an essential element of the active site of the mature decarboxylase.

It is found in the cell membrane. The enzyme catalyses a 1,2-diacyl-sn-glycero-3-phospho-L-serine + H(+) = a 1,2-diacyl-sn-glycero-3-phosphoethanolamine + CO2. It functions in the pathway phospholipid metabolism; phosphatidylethanolamine biosynthesis; phosphatidylethanolamine from CDP-diacylglycerol: step 2/2. In terms of biological role, catalyzes the formation of phosphatidylethanolamine (PtdEtn) from phosphatidylserine (PtdSer). The sequence is that of Phosphatidylserine decarboxylase proenzyme from Xanthomonas oryzae pv. oryzae (strain MAFF 311018).